The chain runs to 225 residues: Claudin-17 (225 aa).

Over 1-7 the chain is Cytoplasmic; it reads MAFYPLQ. Residues 8–28 form a helical membrane-spanning segment; sequence IAGLVLGFLGMVGTLATTLLP. Residues 29 to 81 lie on the Extracellular side of the membrane; that stretch reads QWRVSAFIGSNIIVFERIWEGLWMNCVRQAKARLQCKFYSSMLALSPALEAAR. A helical membrane pass occupies residues 82–102; sequence ALMCVAVALSLIALIIGICGM. Topologically, residues 103-124 are cytoplasmic; sequence KKIQCTGSNERAKAYLLGTSGV. A helical membrane pass occupies residues 125–145; sequence LFILTGIFVLIPVCWTANIII. At 146–164 the chain is on the extracellular side; that stretch reads RDFYNPAVHVGQKRELGAA. The chain crosses the membrane as a helical span at residues 165–185; sequence LFLGWASVAVLFIAGGLLCGF. At 186–225 the chain is on the cytoplasmic side; that stretch reads CCCNRKKQRDGYPAPRPSMPRTDERRRNMTRQSETPTSYV. A disordered region spans residues 194-225; that stretch reads RDGYPAPRPSMPRTDERRRNMTRQSETPTSYV. Over residues 215–225 the composition is skewed to polar residues; the sequence is TRQSETPTSYV.

It belongs to the claudin family. Does not form homotypic polymeric strands and it is not sufficient to form tight junctions by its own. Interacts with OCLN.

The protein localises to the cell junction. It localises to the tight junction. Its subcellular location is the cell membrane. The enzyme catalyses chloride(in) = chloride(out). It carries out the reaction hydrogencarbonate(in) = hydrogencarbonate(out). The catalysed reaction is bromide(in) = bromide(out). It catalyses the reaction iodide(out) = iodide(in). The enzyme catalyses fluoride(in) = fluoride(out). It carries out the reaction nitrate(in) = nitrate(out). The catalysed reaction is thiocyanate(in) = thiocyanate(out). Its function is as follows. Channel-forming tight junction protein with selectivity for anions, including chloride and hydrogencarbonate, and for solutes smaller than 9 Angstrom in diameter. In the kidney proximal tubule, may be involved in quantitative reabsorption of filtered anions. Does not affect water permeability. The polypeptide is Claudin-17 (CLDN17) (Sus scrofa (Pig)).